A 538-amino-acid polypeptide reads, in one-letter code: MEIKEISVPQQGVVADYMNGKKEIQSCFDYMLTEDAFKQRVQDLREREFFRQDLVTHLLEYNTKLQAGEATIQNVKALGDENTYVVIAGQQAGLLTGPLYTIHKIISVLQLAKEKEESLGVKVVPVFWIAGEDHDMDEINHTFVTKNKKIKKTIFHDRNPKKASASESELSLEDCRKWIEEIFKTYPETNFTKDVLQFVDDSLRKSNTYVDFFGHLIMKMFVNSGLILVDSHHPELRKLEVPFFKQIVSKYKEVQEGLHNQQEVIKELGYKPIIETKSNAVHIFMEIDNERVLLEDNQGKFVGKDGTYSFSYEELIEEMERSPERFSNNVVTRPLMQEYVFPTLAFIGGPGELAYWSELQQVFHTIGFRMPPVVPRITITYIERDIATDLHDLQLQERDPFLNNVDKLRENWLSNQIEEPIDDRFVEAKKEIMNIHTSLQQFVKEIDPGLSAFAGKNEFKINEQIELLERMLKRNVEKKHEVELNKFRRIQFALRPLGAPQERVWNVCYYLNQFGLDFVDRVMEKPFSWNGKHHVIKL.

Positions 460–484 form a coiled coil; the sequence is KINEQIELLERMLKRNVEKKHEVEL.

Belongs to the BshC family.

Involved in bacillithiol (BSH) biosynthesis. May catalyze the last step of the pathway, the addition of cysteine to glucosamine malate (GlcN-Mal) to generate BSH. This is Putative cysteine ligase BshC from Bacillus thuringiensis subsp. konkukian (strain 97-27).